The chain runs to 217 residues: UPF0319 protein VS_II0881 (217 aa).

A signal peptide spans 1–21 (MKTIQSIALLSAIVAAPSVLA).

This sequence belongs to the UPF0319 family.

This chain is UPF0319 protein VS_II0881, found in Vibrio atlanticus (strain LGP32) (Vibrio splendidus (strain Mel32)).